An 879-amino-acid polypeptide reads, in one-letter code: Alanine--tRNA ligase (879 aa).

Residues histidine 566, histidine 570, cysteine 668, and histidine 672 each coordinate Zn(2+).

The protein belongs to the class-II aminoacyl-tRNA synthetase family. The cofactor is Zn(2+).

The protein resides in the cytoplasm. It carries out the reaction tRNA(Ala) + L-alanine + ATP = L-alanyl-tRNA(Ala) + AMP + diphosphate. Catalyzes the attachment of alanine to tRNA(Ala) in a two-step reaction: alanine is first activated by ATP to form Ala-AMP and then transferred to the acceptor end of tRNA(Ala). Also edits incorrectly charged Ser-tRNA(Ala) and Gly-tRNA(Ala) via its editing domain. The protein is Alanine--tRNA ligase of Clostridium novyi (strain NT).